Consider the following 1216-residue polypeptide: Phospholipase D B (1216 aa).

The segment covering 1–14 (MNLSQEHAINQNLH) has biased composition (polar residues). The tract at residues 1–48 (MNLSQEHAINQNLHKNQKNEEKIEKKTINKDGRGQMNYDGEEGQGEKS) is disordered. Positions 17–33 (QKNEEKIEKKTINKDGR) are enriched in basic and acidic residues. 2 consecutive EF-hand domains span residues 196–231 (RNADLTISLMNAIDRNGDQKIAFPEFVQALSIMCRG) and 232–267 (TKKERLRFTFEICDFNGDSLVSRDEVYSTVKAISDI). Ca(2+)-binding residues include D209, N211, D213, K215, and E220. Residues 347-462 (EINMNGQLTK…WVNAIRFHSR (116 aa)) form the PH domain. The PLD phosphodiesterase 1 domain occupies 585-612 (LSWSHHQKNAIIDQQIAFVGGIDICLMR). Residues H590, K592, and D597 contribute to the active site. The tract at residues 732-844 (VSYGREKPTH…GLKSKNYKNN (113 aa)) is disordered. The span at 776–789 (NNSTNSENSENSYS) shows a compositional bias: low complexity. Over residues 790-813 (EFDEEDEEGNQEEEDEDEFDEFEK) the composition is skewed to acidic residues. The PLD phosphodiesterase 2 domain maps to 1036-1063 (EQIYVHSKVLIVDDRVAVIGSCNINDRS). Catalysis depends on residues H1041, K1043, and D1048.

It belongs to the phospholipase D family.

Its subcellular location is the cytoplasmic vesicle. It localises to the cytoplasm. It is found in the cell cortex. It carries out the reaction a 1,2-diacyl-sn-glycero-3-phosphocholine + H2O = a 1,2-diacyl-sn-glycero-3-phosphate + choline + H(+). Its activity is regulated as follows. Inhibited by butan-1-ol. Plays a role in cell growth. Hydrolyzes membrane phospholipids, such as PtdCho (phosphatidylcholine), producing the free headgroup and PtdOH (phosphatidic acid; signaling molecule on its own). Involved in the inhibition of actin-based motility and endocytosis. Its inhibition causes complete collapse of F-actin organization. Plays an important role in cell migration by localizing along the anterior cell membrane. Overexpression leads to the inability to aggregate even at higher cell density. Also known as a negative regulator of quorum sensing. In Dictyostelium discoideum (Social amoeba), this protein is Phospholipase D B (pldB).